The sequence spans 174 residues: Adenine phosphoribosyltransferase (174 aa).

This sequence belongs to the purine/pyrimidine phosphoribosyltransferase family. As to quaternary structure, homodimer.

The protein resides in the cytoplasm. It catalyses the reaction AMP + diphosphate = 5-phospho-alpha-D-ribose 1-diphosphate + adenine. It functions in the pathway purine metabolism; AMP biosynthesis via salvage pathway; AMP from adenine: step 1/1. In terms of biological role, catalyzes a salvage reaction resulting in the formation of AMP, that is energically less costly than de novo synthesis. The sequence is that of Adenine phosphoribosyltransferase from Dichelobacter nodosus (strain VCS1703A).